Reading from the N-terminus, the 657-residue chain is Threonine--tRNA ligase (657 aa).

Residues 7 to 70 enclose the TGS domain; sequence ILAVIALTLP…TADAAIEIIT (64 aa). The tract at residues 253–555 is catalytic; that stretch reads DHRKLGAELE…LIEHTAGNFP (303 aa). Zn(2+) contacts are provided by cysteine 351, histidine 402, and histidine 532.

The protein belongs to the class-II aminoacyl-tRNA synthetase family. In terms of assembly, homodimer. The cofactor is Zn(2+).

The protein localises to the cytoplasm. It catalyses the reaction tRNA(Thr) + L-threonine + ATP = L-threonyl-tRNA(Thr) + AMP + diphosphate + H(+). In terms of biological role, catalyzes the attachment of threonine to tRNA(Thr) in a two-step reaction: L-threonine is first activated by ATP to form Thr-AMP and then transferred to the acceptor end of tRNA(Thr). Also edits incorrectly charged L-seryl-tRNA(Thr). This chain is Threonine--tRNA ligase, found in Pelodictyon phaeoclathratiforme (strain DSM 5477 / BU-1).